A 425-amino-acid chain; its full sequence is Serine--tRNA ligase (425 aa).

233–235 contributes to the L-serine binding site; the sequence is TAE. 264 to 266 is a binding site for ATP; sequence RRE. Glutamate 287 serves as a coordination point for L-serine. Position 351–354 (351–354) interacts with ATP; the sequence is EISS. An L-serine-binding site is contributed by serine 387.

It belongs to the class-II aminoacyl-tRNA synthetase family. Type-1 seryl-tRNA synthetase subfamily. Homodimer. The tRNA molecule binds across the dimer.

The protein localises to the cytoplasm. It carries out the reaction tRNA(Ser) + L-serine + ATP = L-seryl-tRNA(Ser) + AMP + diphosphate + H(+). The catalysed reaction is tRNA(Sec) + L-serine + ATP = L-seryl-tRNA(Sec) + AMP + diphosphate + H(+). It functions in the pathway aminoacyl-tRNA biosynthesis; selenocysteinyl-tRNA(Sec) biosynthesis; L-seryl-tRNA(Sec) from L-serine and tRNA(Sec): step 1/1. Functionally, catalyzes the attachment of serine to tRNA(Ser). Is also able to aminoacylate tRNA(Sec) with serine, to form the misacylated tRNA L-seryl-tRNA(Sec), which will be further converted into selenocysteinyl-tRNA(Sec). The polypeptide is Serine--tRNA ligase (Thermotoga maritima (strain ATCC 43589 / DSM 3109 / JCM 10099 / NBRC 100826 / MSB8)).